We begin with the raw amino-acid sequence, 267 residues long: MPENRIARLLKKNKKLLIAYYMPEFPVPGATLPVLEALQKNGADLIELGIAYSDPIGDGPVIQDAAHTAIRNGMSVKKLLDLVRQARKGEGCRKITAPILLMGYCNPLIAYGGDCFLQDAASAGVDGLLLPDLPPEEADDFLERAKGFGLTVVFLVSPVTPPERIEYIDSLSTDFSYCLAVNATTGTAKLSDAGSEAAIDEYLRRVRRHTRKKFVVGFGIKDKARVGHMWELADGAVVGTALLQHIAGAGTPEETARLAGEFWQTLQ.

Residues glutamate 47 and aspartate 58 each act as proton acceptor in the active site.

The protein belongs to the TrpA family. In terms of assembly, tetramer of two alpha and two beta chains.

It carries out the reaction (1S,2R)-1-C-(indol-3-yl)glycerol 3-phosphate + L-serine = D-glyceraldehyde 3-phosphate + L-tryptophan + H2O. The protein operates within amino-acid biosynthesis; L-tryptophan biosynthesis; L-tryptophan from chorismate: step 5/5. In terms of biological role, the alpha subunit is responsible for the aldol cleavage of indoleglycerol phosphate to indole and glyceraldehyde 3-phosphate. The sequence is that of Tryptophan synthase alpha chain from Chlorobium phaeobacteroides (strain DSM 266 / SMG 266 / 2430).